Reading from the N-terminus, the 327-residue chain is MHILKDSLSITVSSGDGGAGCVSFLRERFNTKGGPDGGDGGRGGDVIFKVKANLKSLSLYKNGQRLAANNGKPGMGSRKSGASGEDLVIFVPPNTCIYDVATGSMLFELQNFDDEVIALKGGRGGLGNVHFKSSTKRTPRFAQPGESGATLNLRLELSLIADIGLVGFPNAGKSSLISTITASKSRVANYPFTTRFPHLGVLKASYNDLVIADVPGLIEGASQGIGLGFEFLRHISKTKILVFLIDVASDNFMSAYDILVNELSAYDIGLSSKKRIIVANKLDLEGAIENFNQLKRALVGERVLGISIYDNTGINELVSELFALSRI.

Positions 2 to 160 constitute an Obg domain; that stretch reads HILKDSLSIT…LNLRLELSLI (159 aa). In terms of domain architecture, OBG-type G spans 161–326; it reads ADIGLVGFPN…LVSELFALSR (166 aa). GTP is bound by residues 167–174, 192–196, 213–216, 280–283, and 307–309; these read GFPNAGKS, FTTRF, DVPG, NKLD, and SIY. Mg(2+)-binding residues include Ser174 and Thr194.

It belongs to the TRAFAC class OBG-HflX-like GTPase superfamily. OBG GTPase family. Monomer. Mg(2+) is required as a cofactor.

It is found in the cytoplasm. In terms of biological role, an essential GTPase which binds GTP, GDP and possibly (p)ppGpp with moderate affinity, with high nucleotide exchange rates and a fairly low GTP hydrolysis rate. Plays a role in control of the cell cycle, stress response, ribosome biogenesis and in those bacteria that undergo differentiation, in morphogenesis control. The protein is GTPase Obg of Borrelia hermsii (strain HS1 / DAH).